We begin with the raw amino-acid sequence, 249 residues long: uncharacterized protein (249 aa).

This is an uncharacterized protein from Escherichia coli O6:H1 (strain CFT073 / ATCC 700928 / UPEC).